A 436-amino-acid polypeptide reads, in one-letter code: Proteasome-activating nucleotidase (436 aa).

The stretch at 15 to 97 (EELCRLYRSL…LKSESEQLRS (83 aa)) forms a coiled coil. Residues 222–227 (GTGKTL) and His-361 each bind ATP. The segment at 434–436 (MFA) is docks into pockets in the proteasome alpha-ring to cause gate opening.

The protein belongs to the AAA ATPase family. In terms of assembly, homohexamer. The hexameric complex has a two-ring architecture resembling a top hat that caps the 20S proteasome core at one or both ends. Upon ATP-binding, the C-terminus of PAN interacts with the alpha-rings of the proteasome core by binding to the intersubunit pockets.

The protein localises to the cytoplasm. Functionally, ATPase which is responsible for recognizing, binding, unfolding and translocation of substrate proteins into the archaeal 20S proteasome core particle. Is essential for opening the gate of the 20S proteasome via an interaction with its C-terminus, thereby allowing substrate entry and access to the site of proteolysis. Thus, the C-termini of the proteasomal ATPase function like a 'key in a lock' to induce gate opening and therefore regulate proteolysis. Unfolding activity requires energy from ATP hydrolysis, whereas ATP binding alone promotes ATPase-20S proteasome association which triggers gate opening, and supports translocation of unfolded substrates. The protein is Proteasome-activating nucleotidase of Methanoregula boonei (strain DSM 21154 / JCM 14090 / 6A8).